The following is a 350-amino-acid chain: Pleckstrin (350 aa).

The region spanning 4-101 (KRIREGYLVK…WVRDIKKAIK (98 aa)) is the PH 1 domain. Lys-64 carries the N6-acetyllysine modification. A phosphoserine; by PKC mark is found at Ser-113 and Ser-117. In terms of domain architecture, DEP spans 136-221 (TEKGIKELNL…NPDAFYYFPD (86 aa)). Residues 244-347 (VIIKQGCLLK…WIRAIQMASR (104 aa)) form the PH 2 domain.

Major protein kinase C substrate of platelets. The sequence is that of Pleckstrin (PLEK) from Homo sapiens (Human).